We begin with the raw amino-acid sequence, 171 residues long: S-ribosylhomocysteine lyase (171 aa).

3 residues coordinate Fe cation: histidine 54, histidine 58, and cysteine 128.

It belongs to the LuxS family. In terms of assembly, homodimer. Fe cation is required as a cofactor.

It catalyses the reaction S-(5-deoxy-D-ribos-5-yl)-L-homocysteine = (S)-4,5-dihydroxypentane-2,3-dione + L-homocysteine. In terms of biological role, involved in the synthesis of autoinducer 2 (AI-2) which is secreted by bacteria and is used to communicate both the cell density and the metabolic potential of the environment. The regulation of gene expression in response to changes in cell density is called quorum sensing. Catalyzes the transformation of S-ribosylhomocysteine (RHC) to homocysteine (HC) and 4,5-dihydroxy-2,3-pentadione (DPD). The protein is S-ribosylhomocysteine lyase of Photorhabdus laumondii subsp. laumondii (strain DSM 15139 / CIP 105565 / TT01) (Photorhabdus luminescens subsp. laumondii).